We begin with the raw amino-acid sequence, 569 residues long: CUE domain-containing protein 5 (569 aa).

Positions 17-60 constitute a CUE domain; it reads MAEKARATLKEAFPNTDDAIIRAVLAASGYKLEPAFNALLGLSD. 3 disordered regions span residues 67–139, 175–275, and 311–569; these read MEQA…DDYS, DGEE…SSSA, and EELE…GKET. A compositionally biased stretch (basic and acidic residues) spans 79–100; the sequence is AAHDDPVQRQLEEDERCARELA. Positions 104-113 are enriched in basic residues; the sequence is NSHRPERRRK. Residues 234–249 show a composition bias toward basic and acidic residues; the sequence is SDPHMLNEKDFERLRL. Low complexity predominate over residues 250-274; the sequence is ESSSSPMMRRSSLNSNRRSVESSSS. The span at 329–340 shows a compositional bias: basic and acidic residues; it reads VVVEKKPDESRK. The span at 347–364 shows a compositional bias: polar residues; sequence ETVSEEQMGSSNAKSKVL. Composition is skewed to basic and acidic residues over residues 367–381, 399–500, and 507–558; these read EPKD…KTET, ISEK…KETD, and KEEK…KIEE.

The protein resides in the cytoplasm. This chain is CUE domain-containing protein 5, found in Schizosaccharomyces pombe (strain 972 / ATCC 24843) (Fission yeast).